A 199-amino-acid chain; its full sequence is Transgelin-3 (199 aa).

A Calponin-homology (CH) domain is found at 24–136 (ADLENKLVDW…RTLMALGSVA (113 aa)). Serine 163 bears the Phosphoserine mark. A Calponin-like repeat occupies 174 to 199 (IGLQMGSNKGASQAGMTGYGMPRQIM). Positions 178 to 188 (MGSNKGASQAG) are enriched in polar residues. Positions 178–199 (MGSNKGASQAGMTGYGMPRQIM) are disordered.

Belongs to the calponin family.

This is Transgelin-3 (TAGLN3) from Bos taurus (Bovine).